A 103-amino-acid chain; its full sequence is Large ribosomal subunit protein uL24 (103 aa).

It belongs to the universal ribosomal protein uL24 family. Part of the 50S ribosomal subunit.

In terms of biological role, one of two assembly initiator proteins, it binds directly to the 5'-end of the 23S rRNA, where it nucleates assembly of the 50S subunit. One of the proteins that surrounds the polypeptide exit tunnel on the outside of the subunit. This Alkaliphilus metalliredigens (strain QYMF) protein is Large ribosomal subunit protein uL24.